An 89-amino-acid polypeptide reads, in one-letter code: Endoribonuclease VapD 1 (89 aa).

This sequence belongs to the VapD ribonuclease family. In terms of assembly, homodimer.

In terms of biological role, cleaves ssRNA, mostly between U:A. This is Endoribonuclease VapD 1 from Riemerella anatipestifer (Moraxella anatipestifer).